Reading from the N-terminus, the 876-residue chain is Serrate RNA effector molecule homolog (876 aa).

The segment at 1–90 is disordered; that stretch reads MGDSDDEYDR…RRDWDEHSSD (90 aa). G2 bears the N-acetylglycine mark. A Phosphoserine modification is found at S4. Y8 carries the phosphotyrosine modification. A compositionally biased stretch (basic and acidic residues) spans 8–73; it reads YDRRRRDKFR…ERFSPPRHEL (66 aa). A phosphoserine mark is found at S67, S74, and S136. Residue K150 forms a Glycyl lysine isopeptide (Lys-Gly) (interchain with G-Cter in SUMO2) linkage. The tract at residues 272 to 413 is disordered; it reads EEEEQAGKPG…PKDAPGLECK (142 aa). Basic and acidic residues predominate over residues 297–347; it reads DGERKANEKDDKKEDGKQAENESSSDDKIKKSEGDGDKEEKKEDSEKEAKK. A compositionally biased stretch (acidic residues) spans 370-387; that stretch reads SESESESGQAEEEKEEAD. The span at 388–413 shows a compositional bias: basic and acidic residues; that stretch reads ETLKEKEKPKEEEREKPKDAPGLECK. S493 carries the phosphoserine modification. T544 is subject to Phosphothreonine. Residue S570 is modified to Phosphoserine. The tract at residues 575-597 is disordered; it reads ELLGSSGGAPPEEPPKEGNPAEI. A Phosphothreonine modification is found at T671. S679 bears the Phosphoserine mark. Residues R833, R840, and R850 each carry the omega-N-methylarginine modification. The interval 835–854 is disordered; that stretch reads NYDAFRGQGGYPGKPRNRMV.

It belongs to the ARS2 family. As to quaternary structure, interacts with CASP8AP2, ERBB4, NCBP1/CBP80 and DROSHA. Interacts with LUZP4. Interacts with NCBP2/CBP20 and NCBP3. Interacts with MTREX.

It localises to the nucleus. Its subcellular location is the nucleoplasm. The protein resides in the cytoplasm. Functionally, acts as a mediator between the cap-binding complex (CBC) and the primary microRNAs (miRNAs) processing machinery during cell proliferation. Contributes to the stability and delivery of capped primary miRNA transcripts to the primary miRNA processing complex containing DGCR8 and DROSHA, thereby playing a role in RNA-mediated gene silencing (RNAi) by miRNAs. Binds capped RNAs (m7GpppG-capped RNA); however interaction is probably mediated via its interaction with NCBP1/CBP80 component of the CBC complex. Involved in cell cycle progression at S phase. Does not directly confer arsenite resistance but rather modulates arsenic sensitivity. Independently of its activity on miRNAs, necessary and sufficient to promote neural stem cell self-renewal. Does so by directly binding SOX2 promoter and positively regulating its transcription. This is Serrate RNA effector molecule homolog (SRRT) from Bos taurus (Bovine).